The chain runs to 1402 residues: DNA-directed RNA polymerase subunit beta' (1402 aa).

Positions 71, 73, 86, and 89 each coordinate Zn(2+). Mg(2+) contacts are provided by D462, D464, and D466. Zn(2+)-binding residues include C811, C885, C892, and C895.

Belongs to the RNA polymerase beta' chain family. The RNAP catalytic core consists of 2 alpha, 1 beta, 1 beta' and 1 omega subunit. When a sigma factor is associated with the core the holoenzyme is formed, which can initiate transcription. It depends on Mg(2+) as a cofactor. Requires Zn(2+) as cofactor.

It catalyses the reaction RNA(n) + a ribonucleoside 5'-triphosphate = RNA(n+1) + diphosphate. Functionally, DNA-dependent RNA polymerase catalyzes the transcription of DNA into RNA using the four ribonucleoside triphosphates as substrates. The sequence is that of DNA-directed RNA polymerase subunit beta' from Rhizobium etli (strain ATCC 51251 / DSM 11541 / JCM 21823 / NBRC 15573 / CFN 42).